A 318-amino-acid chain; its full sequence is Ribosome biogenesis protein RLP7 (318 aa).

Disordered regions lie at residues 1 to 49 (MSQP…NRFV) and 101 to 121 (AGSK…DEED). The segment covering 19-40 (ADRTRLEKQELAKKRKEQEEKQ) has biased composition (basic and acidic residues). Acidic residues predominate over residues 110-121 (ELQDVDEEDEED).

The protein belongs to the universal ribosomal protein uL30 family.

Its subcellular location is the nucleus. The protein resides in the nucleolus. Its function is as follows. Involved in the biogenesis of the 60S ribosomal subunit. May act as a specificity factor that binds precursor rRNAs and tethers the enzymes that carry out the early 5' to 3' exonucleolytic reactions that generate the mature rRNAs. The chain is Ribosome biogenesis protein RLP7 (RLP7) from Kluyveromyces lactis (strain ATCC 8585 / CBS 2359 / DSM 70799 / NBRC 1267 / NRRL Y-1140 / WM37) (Yeast).